The following is a 222-amino-acid chain: Protein Thf1 (222 aa).

Residues 169 to 208 (IEKVKRDLELYRSNLDKINQARSLMKELVEQERKRRAQQT) are a coiled coil. A disordered region spans residues 197-222 (VEQERKRRAQQTSAPPAVDASSDAPA). The span at 209–222 (SAPPAVDASSDAPA) shows a compositional bias: low complexity.

It belongs to the THF1 family.

In terms of biological role, may be involved in photosynthetic membrane biogenesis. The sequence is that of Protein Thf1 from Thermosynechococcus vestitus (strain NIES-2133 / IAM M-273 / BP-1).